The primary structure comprises 394 residues: Keratin, type I cuticular Ha4 (394 aa).

Residues 1 to 56 (MSYSCCLPSLGCRTSCSSRPCVPPSCHGYTLPGACNIPANVSNCNWFCEGSFNGSE) form a head region. The IF rod domain occupies 56-367 (EKETMQFLND…SLLESEDCKL (312 aa)). A coil 1A region spans residues 57-91 (KETMQFLNDRLASYLEKVRQLERDNAELEKLIQER). Residues 92–102 (SQQQEPLLCPS) are linker 1. A coil 1B region spans residues 103–203 (YQSYFKTIEE…HEEEVNTLRS (101 aa)). Positions 204 to 219 (QLGDRLNVEVDTAPTV) are linker 12. The segment at 220 to 363 (DLNQVLNETR…NTYRSLLESE (144 aa)) is coil 2. The tract at residues 364–394 (DCKLPCNPCATTNASGNSCGPCGTSQKGCCN) is tail.

The protein belongs to the intermediate filament family. Expressed in the hair follicles.

This is Keratin, type I cuticular Ha4 (KRT34) from Homo sapiens (Human).